Consider the following 116-residue polypeptide: Putative UPF0320 protein YJR162C (116 aa).

This sequence belongs to the UPF0320 family.

This is Putative UPF0320 protein YJR162C from Saccharomyces cerevisiae (strain ATCC 204508 / S288c) (Baker's yeast).